Reading from the N-terminus, the 146-residue chain is MORN repeat-containing protein 4 (146 aa).

MORN repeat units lie at residues Y16–T38, Y39–R61, Y62–T84, and F85–H107.

Interacts with MYO3A.

The protein resides in the cytoplasm. The protein localises to the cell projection. It is found in the filopodium tip. Its subcellular location is the stereocilium. Its function is as follows. Plays a role in promoting axonal degeneration following neuronal injury by toxic insult or trauma. The sequence is that of MORN repeat-containing protein 4 (Morn4) from Mus musculus (Mouse).